The primary structure comprises 249 residues: Triosephosphate isomerase (249 aa).

Position 9–11 (9–11) interacts with substrate; the sequence is NWK. Catalysis depends on His-95, which acts as the Electrophile. Glu-166 functions as the Proton acceptor in the catalytic mechanism. Substrate-binding positions include Gly-172, Ser-211, and 232 to 233; that span reads GG.

It belongs to the triosephosphate isomerase family. In terms of assembly, homodimer.

It is found in the cytoplasm. It carries out the reaction D-glyceraldehyde 3-phosphate = dihydroxyacetone phosphate. It participates in carbohydrate biosynthesis; gluconeogenesis. It functions in the pathway carbohydrate degradation; glycolysis; D-glyceraldehyde 3-phosphate from glycerone phosphate: step 1/1. In terms of biological role, involved in the gluconeogenesis. Catalyzes stereospecifically the conversion of dihydroxyacetone phosphate (DHAP) to D-glyceraldehyde-3-phosphate (G3P). This Legionella pneumophila (strain Lens) protein is Triosephosphate isomerase.